We begin with the raw amino-acid sequence, 318 residues long: Aspartate carbamoyltransferase catalytic subunit (318 aa).

Residues R58 and T59 each contribute to the carbamoyl phosphate site. L-aspartate is bound at residue K86. 3 residues coordinate carbamoyl phosphate: R108, H141, and Q144. L-aspartate is bound by residues R174 and R226. G270 and P271 together coordinate carbamoyl phosphate.

The protein belongs to the aspartate/ornithine carbamoyltransferase superfamily. ATCase family. As to quaternary structure, heterododecamer (2C3:3R2) of six catalytic PyrB chains organized as two trimers (C3), and six regulatory PyrI chains organized as three dimers (R2).

It catalyses the reaction carbamoyl phosphate + L-aspartate = N-carbamoyl-L-aspartate + phosphate + H(+). It participates in pyrimidine metabolism; UMP biosynthesis via de novo pathway; (S)-dihydroorotate from bicarbonate: step 2/3. Functionally, catalyzes the condensation of carbamoyl phosphate and aspartate to form carbamoyl aspartate and inorganic phosphate, the committed step in the de novo pyrimidine nucleotide biosynthesis pathway. This chain is Aspartate carbamoyltransferase catalytic subunit, found in Lactobacillus gasseri (strain ATCC 33323 / DSM 20243 / BCRC 14619 / CIP 102991 / JCM 1131 / KCTC 3163 / NCIMB 11718 / NCTC 13722 / AM63).